Consider the following 275-residue polypeptide: Ribosomal RNA small subunit methyltransferase A (275 aa).

Residues Asn-28, Leu-30, Gly-55, Glu-77, Asp-103, and Asn-123 each coordinate S-adenosyl-L-methionine.

The protein belongs to the class I-like SAM-binding methyltransferase superfamily. rRNA adenine N(6)-methyltransferase family. RsmA subfamily.

The protein localises to the cytoplasm. The enzyme catalyses adenosine(1518)/adenosine(1519) in 16S rRNA + 4 S-adenosyl-L-methionine = N(6)-dimethyladenosine(1518)/N(6)-dimethyladenosine(1519) in 16S rRNA + 4 S-adenosyl-L-homocysteine + 4 H(+). Its function is as follows. Specifically dimethylates two adjacent adenosines (A1518 and A1519) in the loop of a conserved hairpin near the 3'-end of 16S rRNA in the 30S particle. May play a critical role in biogenesis of 30S subunits. This Rhizobium etli (strain ATCC 51251 / DSM 11541 / JCM 21823 / NBRC 15573 / CFN 42) protein is Ribosomal RNA small subunit methyltransferase A.